Reading from the N-terminus, the 219-residue chain is Transmembrane protein 125 (219 aa).

The next 4 helical transmembrane spans lie at 36-56 (LCFVVAVGLVAGCGAGGVALL), 68-88 (LATGTVLCLLALLVLVKQLMS), 114-134 (ALVVLLSGLVLLVTGLTLAGL), and 147-167 (MLSVGIALAALGSLLLLGLLL).

The protein localises to the membrane. This chain is Transmembrane protein 125 (TMEM125), found in Homo sapiens (Human).